The chain runs to 524 residues: L-lactate permease (524 aa).

13 helical membrane-spanning segments follow: residues 12 to 34 (LAVSAFVAAIPILLLLLCLTVFK), 38 to 60 (IQAALLTLLVTFFIAGLVFHLPF), 67 to 89 (IVQGVVQGLWPIGYIIVMAVWLY), 127 to 149 (LEGAAGFGVPIAICAVLLVSLGF), 156 to 178 (MLCLIANGASGAFGAIGIPVGII), 193 to 215 (SMMTALTLPMINFTIPFLLIWLM), 224 to 246 (ILPAILVTSSVYTVSQALITIFI), 250 to 267 (LADIIPSLLTMGLLALFL), 297 to 319 (WSPFYLLTMFVFLWSLPAFKGLL), 339 to 361 (IEVGVDFIGATGTAILLAAVTTV), 374 to 396 (SLLKKVIVDFSIPIMMICAIIGI), 411 to 433 (EAVATTGAFFPFLSPILGWIGVF), and 505 to 522 (YSFGLLVFVSVWTYILSL).

It belongs to the lactate permease family.

The protein localises to the cell membrane. Functionally, may play a role in L-lactate transport. This chain is L-lactate permease (lctP), found in Halalkalibacterium halodurans (strain ATCC BAA-125 / DSM 18197 / FERM 7344 / JCM 9153 / C-125) (Bacillus halodurans).